A 100-amino-acid polypeptide reads, in one-letter code: UPF0251 protein VVA1436 (100 aa).

This sequence belongs to the UPF0251 family.

This Vibrio vulnificus (strain YJ016) protein is UPF0251 protein VVA1436.